Reading from the N-terminus, the 346-residue chain is G-protein coupled receptor homolog U12 (346 aa).

Topologically, residues 1–31 (MICYSFAKNVTFAFLIILQNFFSQHDEEYKY) are extracellular. A helical transmembrane segment spans residues 32–56 (NYTCITPTVRKAQRLESVINGIMLT). Residues 57 to 83 (LILPVSTVVICTLLIYYKWTKQTITSP) lie on the Cytoplasmic side of the membrane. A helical transmembrane segment spans residues 84–108 (YLITLFISDSLHSLTVLLLTLNREA). Residues 109–115 (LTNLNQA) lie on the Extracellular side of the membrane. The chain crosses the membrane as a helical span at residues 116–142 (LCQCVLFVYSASCTYSLCMLAVISTIR). Residues 143-159 (YRTLQRRTLNDKNNNHI) lie on the Cytoplasmic side of the membrane. A helical transmembrane segment spans residues 160 to 181 (KRNVGILFLSSAMCAIPAVLYV). The Extracellular portion of the chain corresponds to 182 to 208 (QVEKKKGNYGKCNIHISTQKAYDLFIG). A helical transmembrane segment spans residues 209 to 229 (IKIVYCFLWGIFPTVIFSYFY). The Cytoplasmic portion of the chain corresponds to 230-245 (VIFGKTLRALTQSKHN). The helical transmembrane segment at 246–272 (KTLSFISLLILSFLCIQIPNLLVMSVE) threads the bilayer. At 273–286 (IFFLYIANTSCLGT) the chain is on the extracellular side. A helical membrane pass occupies residues 287-310 (IQREIVQIISRLMPEIHCLSNPLV). Topologically, residues 311 to 346 (YAFTRTDFRLRFYDFIKCNLCNSSLKRKRNPLTIKN) are cytoplasmic.

This sequence belongs to the G-protein coupled receptor 1 family.

The protein resides in the host cell membrane. The polypeptide is G-protein coupled receptor homolog U12 (U12) (Homo sapiens (Human)).